A 275-amino-acid polypeptide reads, in one-letter code: Tryptophan synthase alpha chain (275 aa).

Residues glutamate 51 and aspartate 62 each act as proton acceptor in the active site.

Belongs to the TrpA family. In terms of assembly, tetramer of two alpha and two beta chains.

The enzyme catalyses (1S,2R)-1-C-(indol-3-yl)glycerol 3-phosphate + L-serine = D-glyceraldehyde 3-phosphate + L-tryptophan + H2O. Its pathway is amino-acid biosynthesis; L-tryptophan biosynthesis; L-tryptophan from chorismate: step 5/5. Functionally, the alpha subunit is responsible for the aldol cleavage of indoleglycerol phosphate to indole and glyceraldehyde 3-phosphate. The polypeptide is Tryptophan synthase alpha chain (Methanopyrus kandleri (strain AV19 / DSM 6324 / JCM 9639 / NBRC 100938)).